An 800-amino-acid polypeptide reads, in one-letter code: Putative antiporter subunit mnhA2 (800 aa).

A run of 20 helical transmembrane segments spans residues M1–S21, I33–A53, G78–A98, L118–F138, F167–M187, G207–F227, T241–L261, Y273–L293, G300–G320, I331–I351, L387–S407, F424–F444, P472–V492, G527–I547, I595–L615, G627–I647, L651–M671, L676–S696, I712–T732, and L768–L788.

This sequence belongs to the CPA3 antiporters (TC 2.A.63) subunit A family. In terms of assembly, may form a heterooligomeric complex that consists of seven subunits: mnhA2, mnhB2, mnhC2, mnhD2, mnhE2, mnhF2 and mnhG2.

Its subcellular location is the cell membrane. In Staphylococcus aureus (strain MSSA476), this protein is Putative antiporter subunit mnhA2 (mnhA2).